Reading from the N-terminus, the 92-residue chain is MNRLLQRRLFLENLLVGVNSTFHQMQKHSINTCCRSLQRILDHLILLQTIHSPAFRLDRMQLRQMRTLACLWIHRRNHDLQATLDAINWISP.

This sequence belongs to the rotavirus A NSP6 family. Interacts with NSP2 and NSP5.

Its subcellular location is the host cytoplasm. The protein resides in the host mitochondrion. The chain is Non-structural protein 6 from Rotavirus A (strain RVA/Human/United Kingdom/ST3/1975/G4P2A[6]) (RV-A).